The following is a 3704-amino-acid chain: Fatty acid synthase 2 (3704 aa).

The span at 27–41 (AVSAHGSPPSSASPG) shows a compositional bias: low complexity. The tract at residues 27–52 (AVSAHGSPPSSASPGPDDKAFSVDGT) is disordered. The tract at residues 216–475 (ALFGGQGNNH…QARIPFSKRK (260 aa)) is acetyltransferase (AT) domain. The enoyl reductase (ER) domain stretch occupies residues 639-887 (SRLLGKPPIM…LIASTQGCSD (249 aa)). The dehydratase (DH) domain stretch occupies residues 1216 to 1709 (GEQPSWIRAL…VPGDQLSVQL (494 aa)). The MaoC-like domain occupies 1624–1730 (PKTNEPYSRA…VQIDASNQRG (107 aa)). The malonyl/palmitoyl transferase (MT/PT) domain stretch occupies residues 1747–2112 (YVFTGQGSQA…IEHVSEVTRS (366 aa)). Residues 2265-2343 (DERLDPLLTV…AALRPGYSGE (79 aa)) enclose the Carrier domain. O-(pantetheine 4'-phosphoryl)serine is present on Ser2303. The segment at 2733–2969 (GLDVLLTGVG…LGLVEPEFAS (237 aa)) is ketoreductase (KR) domain. The region spanning 3176 to 3623 (QQEIELTHDL…QVGGIAMILH (448 aa)) is the Ketosynthase family 3 (KS3) domain. Active-site for beta-ketoacyl synthase activity residues include Cys3359, His3506, and His3547.

It in the N-terminal section; belongs to the fungal fatty acid synthetase subunit beta family. The protein in the C-terminal section; belongs to the thiolase-like superfamily. Fungal fatty acid synthetase subunit alpha family.

It functions in the pathway secondary metabolite biosynthesis. In terms of biological role, fatty acid synthase; part of the gene cluster that mediates the biosynthesis of the glycolipid biosurfactant ustilagic acid (UA). UA is a secreted cellobiose glycolipid that is toxic for many microorganisms and confers biocontrol activity to U.maydis. UA consists of 15,16-dihydroxypalmitic or 2,15,16-trihydroxypalmitic acid, which is O-glycosidically linked to cellobiose at its terminal hydroxyl group. In addition, the cellobiose moiety is acetylated and acylated with a short-chain hydroxy fatty acid. UA biosynthesis starts with omega-hydroxylation of palmitic acid catalyzed by the cytochrome P450 monooxygenase cyp1. Terminal hydroxylation of palmitic acid precedes subterminal hydroxylation catalyzed by the cytochrome P450 monooxygenase cyp2. Sequential glucosylation of the hydroxy fatty acid is probably catalyzed by the glycosyltransferase ugt1. The cellobiose lipid is further decorated by acetylation of the proximal glucose residue and by acylation with a short-chain beta-hydroxy fatty acid at the distal glucose residue. The acyltransferase uat1 may be a good candidate for catalyzing either acetylation or acylation of the cellobiose lipid. The fatty acid synthase fas2 may be involved in synthesis of the carbon backbone of the short-chain beta-hydroxy fatty acid esterified to the cellobiose disaccharide. The secreted UA consists of a mixture of both alpha-hydroxylated and non-hydroxylated glycolipids; therefore, alpha-hydroxylation of the long-chain fatty, catalyzed by the fatty acid hydroxylase ahd1, occurs late in UA biosynthesis and may be the last step before secretion. The sequence is that of Fatty acid synthase 2 from Mycosarcoma maydis (Corn smut fungus).